We begin with the raw amino-acid sequence, 243 residues long: Vesicle-associated membrane protein-associated protein B (243 aa).

An N-acetylalanine modification is found at alanine 2. The Cytoplasmic portion of the chain corresponds to 2–218 (AKVEQVLSLE…PAPATPGKEE (217 aa)). Residues 7–124 (VLSLEPQHEL…MDSKLRCVFE (118 aa)) form the MSP domain. Serine 146 is modified (phosphoserine). A Glycyl lysine isopeptide (Lys-Gly) (interchain with G-Cter in SUMO1) cross-link involves residue lysine 147. Phosphothreonine is present on threonine 150. Residues serine 158 and serine 159 each carry the phosphoserine modification. The stretch at 161 to 196 (LDDTEVKKVMEECKRLQSEVQRLREENKQLKEEDGL) forms a coiled coil. Residues 185–197 (EENKQLKEEDGLR) show a composition bias toward basic and acidic residues. The disordered stretch occupies residues 185–217 (EENKQLKEEDGLRMRKPVLSNSPAPAPATPGKE). Serine 206 carries the post-translational modification Phosphoserine. The helical; Anchor for type IV membrane protein transmembrane segment at 219 to 239 (GLSTRLLALVVLFFIVGVIIG) threads the bilayer.

Belongs to the VAMP-associated protein (VAP) (TC 9.B.17) family. As to quaternary structure, homodimer, and heterodimer with VAPA. Interacts with VAMP1 and VAMP2. Interacts (via MSP domain) with ZFYVE27. Interacts with RMDN3. Interacts with KIF5A in a ZFYVE27-dependent manner. Interacts (via MSP domain) with STARD3 (via phospho-FFAT motif). Interacts with STARD3NL (via FFAT motif). Interacts with CERT1. Interacts with PLEKHA3 and SACM1L to form a ternary complex. Interacts with VPS13A (via FFAT motif). Interacts with RB1CC1 (via phosphorylated FFAT motif), MIGA2 (via phosphorylated FFAT motif), RMDN3 (via phosphorylated FFAT motif), OSBPL1A (via FFAT motif), KCNB1 (via phosphorylated FFAT motif) and KCNB2 (via phosphorylated FFAT motif). Interacts (via MSP domain) with WDR44 (via FFAT motif); the interactions connect the endoplasmic reticulum (ER) with the endosomal tubule.

It is found in the endoplasmic reticulum membrane. Functionally, endoplasmic reticulum (ER)-anchored protein that mediates the formation of contact sites between the ER and endosomes via interaction with FFAT motif-containing proteins such as STARD3 or WDR44. Interacts with STARD3 in a FFAT motif phosphorylation dependent manner. Via interaction with WDR44 participates in neosynthesized protein export. Participates in the endoplasmic reticulum unfolded protein response (UPR) by inducing ERN1/IRE1 activity. Involved in cellular calcium homeostasis regulation. The polypeptide is Vesicle-associated membrane protein-associated protein B (Sus scrofa (Pig)).